We begin with the raw amino-acid sequence, 145 residues long: MKKSARRQSRELATQGLYQWLLSNAPSGEIDAQLRGALGYDKADKELLEAILHGVIREHATLVEALAPSLDRPIDQLSPVERAVLLIATFELTHHVETPYRVIINEAVELAKTFGGSDGYKYVNGVLDKLAAKLRPAETQARRNG.

It belongs to the NusB family.

In terms of biological role, involved in transcription antitermination. Required for transcription of ribosomal RNA (rRNA) genes. Binds specifically to the boxA antiterminator sequence of the ribosomal RNA (rrn) operons. This Burkholderia cenocepacia (strain HI2424) protein is Transcription antitermination protein NusB.